The sequence spans 541 residues: 5' exonuclease Apollo (541 aa).

A Glycyl lysine isopeptide (Lys-Gly) (interchain with G-Cter in SUMO2) cross-link involves residue K334. Disordered stretches follow at residues T350–K375 and I450–L489. The segment covering P358–S371 has biased composition (basic and acidic residues). The TBM signature appears at E492 to F507.

Belongs to the DNA repair metallo-beta-lactamase (DRMBL) family. Interacts with TERF2; the interaction is direct. Interacts with MUS81, MRE11 and FANCD2. Interacts with HSPA2, HSPA8 and HSPA14. Interacts with SPAG5. Ubiquitinated, leading to its degradation. Interaction with TERF2 protects it from ubiquitination.

It is found in the chromosome. The protein localises to the telomere. It localises to the nucleus. Its subcellular location is the cytoplasm. The protein resides in the cytoskeleton. It is found in the microtubule organizing center. The protein localises to the centrosome. It catalyses the reaction a beta-lactam + H2O = a substituted beta-amino acid. 5'-3' exonuclease that plays a central role in telomere maintenance and protection during S-phase. Participates in the protection of telomeres against non-homologous end-joining (NHEJ)-mediated repair, thereby ensuring that telomeres do not fuse. Plays a key role in telomeric loop (T loop) formation by being recruited by TERF2 at the leading end telomeres and by processing leading-end telomeres immediately after their replication via its exonuclease activity: generates 3' single-stranded overhang at the leading end telomeres avoiding blunt leading-end telomeres that are vulnerable to end-joining reactions and expose the telomere end in a manner that activates the DNA repair pathways. Together with TERF2, required to protect telomeres from replicative damage during replication by controlling the amount of DNA topoisomerase (TOP1, TOP2A and TOP2B) needed for telomere replication during fork passage and prevent aberrant telomere topology. Also involved in response to DNA damage: plays a role in response to DNA interstrand cross-links (ICLs) by facilitating double-strand break formation. In case of spindle stress, involved in prophase checkpoint. Possesses beta-lactamase activity, catalyzing the hydrolysis of penicillin G and nitrocefin. Exhibits no activity towards other beta-lactam antibiotic classes including cephalosporins (cefotaxime) and carbapenems (imipenem). The polypeptide is 5' exonuclease Apollo (Dclre1b) (Rattus norvegicus (Rat)).